A 477-amino-acid polypeptide reads, in one-letter code: Trigger factor (477 aa).

A PPIase FKBP-type domain is found at 169 to 254; the sequence is EDRVTIDYLG…VKEVAKPNEL (86 aa). The segment at 435–477 is disordered; it reads VSKEELTAEDEDAASEAKPAKKAAAKKKAAPKKKAEEGKSEEA. Residues 454-466 show a composition bias toward basic residues; sequence AKKAAAKKKAAPK. Residues 467–477 show a composition bias toward basic and acidic residues; the sequence is KKAEEGKSEEA.

Belongs to the FKBP-type PPIase family. Tig subfamily.

It localises to the cytoplasm. It carries out the reaction [protein]-peptidylproline (omega=180) = [protein]-peptidylproline (omega=0). Functionally, involved in protein export. Acts as a chaperone by maintaining the newly synthesized protein in an open conformation. Functions as a peptidyl-prolyl cis-trans isomerase. This Brucella suis biovar 1 (strain 1330) protein is Trigger factor.